Reading from the N-terminus, the 328-residue chain is MKQCWVDLSCWNKDLATVALEAGVDAIVVDDAAKVNVLAKVTTIAPNGDLIPGKDVSMVTIVDKASEEACLEKAKLGPVIVSTGDWTVIPLENLVAQSDRIFAAVGSVEEARLALTILEQGVAGVVLMTTDPEVIRTVAAMVRGAGAKVPLVPFTLTVVRQLGMGDRVCIDTCSILADGEGMLVGNTSSAFFLVHAETIENLYVAPRPFRVNAGAVHAYVLTPGNRTAYLADLRAGDLVTVTAADGGTEEVIIGRLKIEKRPLLLVEGEAGGVKAGLVLQNAETIRLVGLDGKARSVVDLKPGDQVLGMVAEGGRHFGYAVKEQICEQ.

Belongs to the archaeal-type DHQ synthase family.

The enzyme catalyses 2-amino-2,3,7-trideoxy-D-lyxo-hept-6-ulosonate + NAD(+) + H2O = 3-dehydroquinate + NH4(+) + NADH + H(+). Catalyzes the oxidative deamination and cyclization of 2-amino-3,7-dideoxy-D-threo-hept-6-ulosonic acid (ADH) to yield 3-dehydroquinate (DHQ), which is fed into the canonical shikimic pathway of aromatic amino acid biosynthesis. The sequence is that of 3-dehydroquinate synthase from Methanosphaerula palustris (strain ATCC BAA-1556 / DSM 19958 / E1-9c).